A 1251-amino-acid polypeptide reads, in one-letter code: ATP-dependent helicase/nuclease subunit A (1251 aa).

The 477-residue stretch at 5–481 (TKWTDEQWEA…IILSRNFRSR (477 aa)) folds into the UvrD-like helicase ATP-binding domain. 26-33 (AAAGAGKT) is a binding site for ATP. A UvrD-like helicase C-terminal domain is found at 526-824 (TVGGEVEFHL…RIMSIHKSKG (299 aa)). Residues 544–565 (NFTFENEGEEGRQADEGEEDEE) form a disordered region.

The protein belongs to the helicase family. AddA subfamily. In terms of assembly, heterodimer of AddA and AddB/RexB. Mg(2+) serves as cofactor.

The enzyme catalyses Couples ATP hydrolysis with the unwinding of duplex DNA by translocating in the 3'-5' direction.. It catalyses the reaction ATP + H2O = ADP + phosphate + H(+). The heterodimer acts as both an ATP-dependent DNA helicase and an ATP-dependent, dual-direction single-stranded exonuclease. Recognizes the chi site generating a DNA molecule suitable for the initiation of homologous recombination. The AddA nuclease domain is required for chi fragment generation; this subunit has the helicase and 3' -&gt; 5' nuclease activities. The sequence is that of ATP-dependent helicase/nuclease subunit A from Acetivibrio thermocellus (strain ATCC 27405 / DSM 1237 / JCM 9322 / NBRC 103400 / NCIMB 10682 / NRRL B-4536 / VPI 7372) (Clostridium thermocellum).